The chain runs to 327 residues: Methionyl-tRNA formyltransferase (327 aa).

121 to 124 lines the (6S)-5,6,7,8-tetrahydrofolate pocket; the sequence is SLLP.

The protein belongs to the Fmt family.

It catalyses the reaction L-methionyl-tRNA(fMet) + (6R)-10-formyltetrahydrofolate = N-formyl-L-methionyl-tRNA(fMet) + (6S)-5,6,7,8-tetrahydrofolate + H(+). Its function is as follows. Attaches a formyl group to the free amino group of methionyl-tRNA(fMet). The formyl group appears to play a dual role in the initiator identity of N-formylmethionyl-tRNA by promoting its recognition by IF2 and preventing the misappropriation of this tRNA by the elongation apparatus. This chain is Methionyl-tRNA formyltransferase, found in Burkholderia mallei (strain ATCC 23344).